A 132-amino-acid chain; its full sequence is Large ribosomal subunit protein uL14 (132 aa).

It belongs to the universal ribosomal protein uL14 family. The L3/L14/L24e cluster may contact the 16S rRNA in 2 intersubunit bridges. Part of the 50S ribosomal subunit. Forms a cluster with proteins L3 and L24e.

In terms of biological role, forms part of two intersubunit bridges in the 70S ribosome. Binds to 23S rRNA. The chain is Large ribosomal subunit protein uL14 from Haloarcula marismortui (strain ATCC 43049 / DSM 3752 / JCM 8966 / VKM B-1809) (Halobacterium marismortui).